Reading from the N-terminus, the 245-residue chain is Putative [LysW]-aminoadipate/[LysW]-glutamate kinase (245 aa).

Substrate-binding residues include Arg60 and Asn162.

The protein belongs to the acetylglutamate kinase family. LysZ subfamily.

The protein localises to the cytoplasm. The enzyme catalyses [amino-group carrier protein]-C-terminal-N-(1,4-dicarboxybutan-1-yl)-L-glutamine + ATP = [amino-group carrier protein]-C-terminal-N-(1-carboxy-5-phosphooxy-5-oxopentan-1-yl)-L-glutamine + ADP. It carries out the reaction [amino-group carrier protein]-C-terminal-gamma-(L-glutamyl)-L-glutamate + ATP = [amino-group carrier protein]-C-terminal-gamma-(5-phospho-L-glutamyl)-L-glutamate + ADP. It participates in amino-acid biosynthesis; L-lysine biosynthesis via AAA pathway; L-lysine from L-alpha-aminoadipate (Thermus route): step 2/5. Its pathway is amino-acid biosynthesis; L-arginine biosynthesis. Involved in both the arginine and lysine biosynthetic pathways. Phosphorylates the LysW-bound precursors glutamate (for arginine biosynthesis), respectively alpha-aminoadipate (for lysine biosynthesis). The protein is Putative [LysW]-aminoadipate/[LysW]-glutamate kinase of Pyrococcus abyssi (strain GE5 / Orsay).